We begin with the raw amino-acid sequence, 217 residues long: Ribosomal RNA small subunit methyltransferase G (217 aa).

Residues glycine 79, leucine 84, isoleucine 130–glutamate 131, and arginine 148 each bind S-adenosyl-L-methionine.

It belongs to the methyltransferase superfamily. RNA methyltransferase RsmG family.

It localises to the cytoplasm. It carries out the reaction guanosine(527) in 16S rRNA + S-adenosyl-L-methionine = N(7)-methylguanosine(527) in 16S rRNA + S-adenosyl-L-homocysteine. Its function is as follows. Specifically methylates the N7 position of guanine in position 527 of 16S rRNA. The protein is Ribosomal RNA small subunit methyltransferase G of Desulfotalea psychrophila (strain LSv54 / DSM 12343).